The primary structure comprises 511 residues: Chromosomal replication initiator protein DnaA (511 aa).

The segment at 1–90 is domain I, interacts with DnaA modulators; the sequence is MSVELWQQCV…KRSSAPRAAP (90 aa). The interval 91–174 is domain II; it reads NAPLAAAASQ…QVEGALKHTS (84 aa). The tract at residues 133-162 is disordered; that stretch reads VAAHDEPSRDSFDPMAGASSQQAPARAEQR. Residues 135-144 are compositionally biased toward basic and acidic residues; that stretch reads AHDEPSRDSF. A domain III, AAA+ region region spans residues 175 to 391; the sequence is YLNRTFTFEN…GALKRVIAHS (217 aa). Residues Gly-219, Gly-221, Lys-222, and Thr-223 each contribute to the ATP site. The interval 392–511 is domain IV, binds dsDNA; the sequence is HFMGRDITIE…YKNLLRTLTT (120 aa).

This sequence belongs to the DnaA family. As to quaternary structure, oligomerizes as a right-handed, spiral filament on DNA at oriC.

It is found in the cytoplasm. Its function is as follows. Plays an essential role in the initiation and regulation of chromosomal replication. ATP-DnaA binds to the origin of replication (oriC) to initiate formation of the DNA replication initiation complex once per cell cycle. Binds the DnaA box (a 9 base pair repeat at the origin) and separates the double-stranded (ds)DNA. Forms a right-handed helical filament on oriC DNA; dsDNA binds to the exterior of the filament while single-stranded (ss)DNA is stabiized in the filament's interior. The ATP-DnaA-oriC complex binds and stabilizes one strand of the AT-rich DNA unwinding element (DUE), permitting loading of DNA polymerase. After initiation quickly degrades to an ADP-DnaA complex that is not apt for DNA replication. Binds acidic phospholipids. This chain is Chromosomal replication initiator protein DnaA, found in Pseudomonas savastanoi pv. phaseolicola (strain 1448A / Race 6) (Pseudomonas syringae pv. phaseolicola (strain 1448A / Race 6)).